A 396-amino-acid polypeptide reads, in one-letter code: Probable sugar efflux transporter (396 aa).

Helical transmembrane passes span 15–35, 50–70, 81–101, 103–123, 136–156, 170–190, 209–229, 246–266, 275–295, 299–319, 333–353, and 364–384; these read VVTL…PVGL, VGIM…PFML, LICL…SWSF, VLVI…SITA, AQAL…GLPL, FFAI…LLPL, PALM…YTAY, FATA…VIFG, TLVS…LPAA, IHLG…GLGM, VAMA…ALVG, and MIGY…IIIF.

This sequence belongs to the major facilitator superfamily. SotB (TC 2.A.1.2) family.

Its subcellular location is the cell inner membrane. In terms of biological role, involved in the efflux of sugars. The physiological role may be the reduction of the intracellular concentration of toxic sugars or sugar metabolites. The chain is Probable sugar efflux transporter from Escherichia coli (strain SMS-3-5 / SECEC).